We begin with the raw amino-acid sequence, 136 residues long: uncharacterized protein (136 aa).

Positions 1–33 are disordered; the sequence is MRDHLPPGLPPDPFADDPCDPSAALEAVEPGQP.

To M.leprae ML0386.

This is an uncharacterized protein from Mycobacterium tuberculosis (strain CDC 1551 / Oshkosh).